The sequence spans 572 residues: O-fucosyltransferase 16 (572 aa).

Residues 17-37 traverse the membrane as a helical; Signal-anchor for type II membrane protein segment; the sequence is LLPLVIAVSLSLLILFAFLSF. N92 and N136 each carry an N-linked (GlcNAc...) asparagine glycan. Residue 274–276 participates in substrate binding; it reads HLR. N-linked (GlcNAc...) asparagine glycosylation is found at N446 and N506. The disordered stretch occupies residues 498 to 572; sequence ESRKLGKKNK…EPELEAMLSD (75 aa). Residues 521-541 show a composition bias toward acidic residues; the sequence is DQTEEDDPDWSEPDYEEEQSD. The N-linked (GlcNAc...) asparagine glycan is linked to N549. A compositionally biased stretch (acidic residues) spans 554–566; sequence DYDDPSTSDEPEL.

Belongs to the glycosyltransferase GT106 family.

The protein resides in the membrane. Its pathway is glycan metabolism. This is O-fucosyltransferase 16 from Arabidopsis thaliana (Mouse-ear cress).